Here is a 623-residue protein sequence, read N- to C-terminus: Keratin, type I cytoskeletal 9 (623 aa).

A compositionally biased stretch (low complexity) spans 1-13 (MSCRQFSSSYLSR). The interval 1–25 (MSCRQFSSSYLSRSGGGGGGGLGSG) is disordered. Residues 1-152 (MSCRQFSSSY…GGDGGILTAN (152 aa)) are head. S14 and S57 each carry phosphoserine. The segment covering 14-25 (SGGGGGGGLGSG) has biased composition (gly residues). Positions 153–188 (EKSTMQELNSRLASYLDKVQALEEANNDLENKIQDW) are coil 1A. The 313-residue stretch at 153 to 465 (EKSTMQELNS…NLLEGGQEDF (313 aa)) folds into the IF rod domain. Residues 189–207 (YDKKGPAAIQKNYSPYYNT) form a linker 1 region. A coil 1B region spans residues 208–299 (IDDLKDQIVD…KNHKEEMSQL (92 aa)). The linker 12 stretch occupies residues 300–322 (TGQNSGDVNVEINVAPGKDLTKT). A coil 2 region spans residues 323 to 461 (LNDMRQEYEQ…ETYHNLLEGG (139 aa)). 2 disordered regions span residues 462-496 (QEDF…SGGS) and 534-623 (YGGG…SSHS). The interval 462–623 (QEDFESSGAG…GGGSGKSSHS (162 aa)) is tail. The span at 471-496 (GKIGLGGRGGSGGSYGRGSRGGSGGS) shows a compositional bias: gly residues.

This sequence belongs to the intermediate filament family. Heterotetramer of two type I and two type II keratins. Expressed in the terminally differentiated epidermis of palms and soles.

Functionally, may serve an important special function either in the mature palmar and plantar skin tissue or in the morphogenetic program of the formation of these tissues. Plays a role in keratin filament assembly. This chain is Keratin, type I cytoskeletal 9 (KRT9), found in Homo sapiens (Human).